We begin with the raw amino-acid sequence, 144 residues long: Maximins 3/H5 (144 aa).

The signal sequence occupies residues 1-18; that stretch reads MNFKYIFAVSFLIASAYA. 2 propeptides span residues 19–43 and 74–123; these read RSVQ…REIR and TAEE…KEKR. Leucine 143 is subject to Leucine amide.

Belongs to the bombinin family. Expressed by the skin glands.

It is found in the secreted. Maximin-3 shows antibacterial activity against both Gram-positive and Gram-negative bacteria. It also shows antimicrobial activity against the fungus C.albicans, but not against A.flavus nor P.uticale. It has little hemolytic activity. It possess a significant cytotoxicity against tumor cell lines. It possess a significant anti-HIV activity. It shows high spermicidal activity. Its function is as follows. Maximin-H5 shows antibacterial activity only against the Gram-positive bacteria S.aureus. The other bacterial and fungal strains tested were resistant to it. The presence of metal ions, like Zn(2+) and Mg(2+), did not increase its antimicrobial potency. Does not show hemolytic activity (in a concentration up to 80 uM). In Bombina maxima (Giant fire-bellied toad), this protein is Maximins 3/H5.